The primary structure comprises 264 residues: Pro-opiomelanocortin (264 aa).

A signal peptide spans 1 to 26; it reads MPRSCCSRSGALLLALLLQASMEVRG. Phenylalanine 87 is modified (phenylalanine amide). 2 disordered regions span residues 88–204 and 219–238; these read GRRN…DLEH and RMEH…GGFM. N-linked (GlcNAc...) asparagine glycosylation occurs at asparagine 91. Composition is skewed to basic and acidic residues over residues 99-122 and 130-142; these read QKRE…EPRG and REGK…EHFR. Glutamate 131 is subject to Glutamic acid 1-amide. Serine 135 is modified (N-acetylserine; in Corticotropin). Valine 147 carries the post-translational modification Valine amide. The residue at position 165 (serine 165) is a Phosphoserine. Basic and acidic residues predominate over residues 172-186; the sequence is EFKRELTGQRPRAGD. Positions 189–199 are enriched in low complexity; that stretch reads DGPADDGAGPR. A compositionally biased stretch (basic and acidic residues) spans 219-234; sequence RMEHFRWGSPPKDKRY.

This sequence belongs to the POMC family. In terms of processing, specific enzymatic cleavages at paired basic residues yield the different active peptides. In terms of tissue distribution, ACTH and MSH are produced by the pituitary gland.

It is found in the secreted. Its function is as follows. Stimulates the adrenal glands to release cortisol. In terms of biological role, anorexigenic peptide. Increases the pigmentation of skin by increasing melanin production in melanocytes. Increases the pigmentation of skin by increasing melanin production in melanocytes. Functionally, endogenous orexigenic opiate. Its function is as follows. Endogenous opiate. The polypeptide is Pro-opiomelanocortin (POMC) (Macaca nemestrina (Pig-tailed macaque)).